A 255-amino-acid polypeptide reads, in one-letter code: Triosephosphate isomerase (255 aa).

10 to 12 (NWK) is a binding site for substrate. Catalysis depends on His-96, which acts as the Electrophile. The active-site Proton acceptor is the Glu-168. Residues Gly-174, Ser-213, and 234–235 (GG) each bind substrate.

Belongs to the triosephosphate isomerase family. As to quaternary structure, homodimer.

The protein resides in the cytoplasm. The catalysed reaction is D-glyceraldehyde 3-phosphate = dihydroxyacetone phosphate. It functions in the pathway carbohydrate biosynthesis; gluconeogenesis. Its pathway is carbohydrate degradation; glycolysis; D-glyceraldehyde 3-phosphate from glycerone phosphate: step 1/1. Involved in the gluconeogenesis. Catalyzes stereospecifically the conversion of dihydroxyacetone phosphate (DHAP) to D-glyceraldehyde-3-phosphate (G3P). The sequence is that of Triosephosphate isomerase from Histophilus somni (strain 2336) (Haemophilus somnus).